The sequence spans 232 residues: Phosphatidylserine decarboxylase proenzyme (232 aa).

Ser-190 (schiff-base intermediate with substrate; via pyruvic acid) is an active-site residue. Residue Ser-190 is modified to Pyruvic acid (Ser); by autocatalysis.

It belongs to the phosphatidylserine decarboxylase family. PSD-A subfamily. As to quaternary structure, heterodimer of a large membrane-associated beta subunit and a small pyruvoyl-containing alpha subunit. The cofactor is pyruvate. Is synthesized initially as an inactive proenzyme. Formation of the active enzyme involves a self-maturation process in which the active site pyruvoyl group is generated from an internal serine residue via an autocatalytic post-translational modification. Two non-identical subunits are generated from the proenzyme in this reaction, and the pyruvate is formed at the N-terminus of the alpha chain, which is derived from the carboxyl end of the proenzyme. The post-translation cleavage follows an unusual pathway, termed non-hydrolytic serinolysis, in which the side chain hydroxyl group of the serine supplies its oxygen atom to form the C-terminus of the beta chain, while the remainder of the serine residue undergoes an oxidative deamination to produce ammonia and the pyruvoyl prosthetic group on the alpha chain.

Its subcellular location is the cell membrane. The enzyme catalyses a 1,2-diacyl-sn-glycero-3-phospho-L-serine + H(+) = a 1,2-diacyl-sn-glycero-3-phosphoethanolamine + CO2. Its pathway is phospholipid metabolism; phosphatidylethanolamine biosynthesis; phosphatidylethanolamine from CDP-diacylglycerol: step 2/2. Its function is as follows. Catalyzes the formation of phosphatidylethanolamine (PtdEtn) from phosphatidylserine (PtdSer). The sequence is that of Phosphatidylserine decarboxylase proenzyme from Agrobacterium fabrum (strain C58 / ATCC 33970) (Agrobacterium tumefaciens (strain C58)).